A 415-amino-acid chain; its full sequence is Gamma-glutamyl phosphate reductase (415 aa).

It belongs to the gamma-glutamyl phosphate reductase family.

It localises to the cytoplasm. It carries out the reaction L-glutamate 5-semialdehyde + phosphate + NADP(+) = L-glutamyl 5-phosphate + NADPH + H(+). Its pathway is amino-acid biosynthesis; L-proline biosynthesis; L-glutamate 5-semialdehyde from L-glutamate: step 2/2. Functionally, catalyzes the NADPH-dependent reduction of L-glutamate 5-phosphate into L-glutamate 5-semialdehyde and phosphate. The product spontaneously undergoes cyclization to form 1-pyrroline-5-carboxylate. The polypeptide is Gamma-glutamyl phosphate reductase (Mycolicibacterium gilvum (strain PYR-GCK) (Mycobacterium gilvum (strain PYR-GCK))).